We begin with the raw amino-acid sequence, 484 residues long: Synaptic vesicle membrane protein VAT-1 homolog (484 aa).

Low complexity-rich tracts occupy residues 1 to 13 and 40 to 61; these read MSGE…QQNA and SAST…PAAE. Disordered regions lie at residues 1–65 and 402–484; these read MSGE…KAPE and IGKI…KEEN. Over residues 411 to 484 the composition is skewed to basic and acidic residues; that stretch reads PMKEEEKKEE…KKEEVKKEEN (74 aa).

It belongs to the zinc-containing alcohol dehydrogenase family. Quinone oxidoreductase subfamily.

The polypeptide is Synaptic vesicle membrane protein VAT-1 homolog (Danio rerio (Zebrafish)).